Consider the following 244-residue polypeptide: Phosphoribosyl isomerase A (244 aa).

Aspartate 10 serves as the catalytic Proton acceptor. Aspartate 129 serves as the catalytic Proton donor.

It belongs to the HisA/HisF family.

Its subcellular location is the cytoplasm. The catalysed reaction is 1-(5-phospho-beta-D-ribosyl)-5-[(5-phospho-beta-D-ribosylamino)methylideneamino]imidazole-4-carboxamide = 5-[(5-phospho-1-deoxy-D-ribulos-1-ylimino)methylamino]-1-(5-phospho-beta-D-ribosyl)imidazole-4-carboxamide. It carries out the reaction N-(5-phospho-beta-D-ribosyl)anthranilate = 1-(2-carboxyphenylamino)-1-deoxy-D-ribulose 5-phosphate. It functions in the pathway amino-acid biosynthesis; L-histidine biosynthesis; L-histidine from 5-phospho-alpha-D-ribose 1-diphosphate: step 4/9. The protein operates within amino-acid biosynthesis; L-tryptophan biosynthesis; L-tryptophan from chorismate: step 3/5. Its function is as follows. Involved in both the histidine and tryptophan biosynthetic pathways. The polypeptide is Phosphoribosyl isomerase A (priA) (Mycobacterium tuberculosis (strain CDC 1551 / Oshkosh)).